The sequence spans 2175 residues: Genome polyprotein (2175 aa).

Residue G2 is the site of N-myristoyl glycine; by host attachment. At 2–1485 (GAQLSRNTAG…NVNRALAVIQ (1484 aa)) the chain is on the cytoplasmic side. Amphipathic alpha-helix regions lie at residues 557–574 (ILQN…DKQV) and 560–581 (NDPG…LVAG). Active-site for protease 2A activity residues include H861 and D879. Residues C896 and C898 each coordinate Zn(2+). C950 functions as the For protease 2A activity in the catalytic mechanism. Zn(2+) contacts are provided by C956 and H958. Residues 1090–1162 (SDNWMKKFTE…EHSSASQERQ (73 aa)) form a membrane-binding region. Residues 1090 to 1228 (SDNWMKKFTE…SPGTGQSLAT (139 aa)) are oligomerization. An RNA-binding region spans residues 1111 to 1115 (AAKIS). An SF3 helicase domain is found at 1194–1352 (EKRVLGAMQF…YKRDGVTLDV (159 aa)). 3 residues coordinate Zn(2+): C1359, C1370, and C1375. The segment at 1359–1375 (CEDCSPANFKKCMPLIC) adopts a C4-type; degenerate zinc-finger fold. Residues 1403-1410 (ESNRRYNI) are RNA-binding. Positions 1414 to 1419 (LEALFQ) are oligomerization. The stretch at 1486 to 1501 (SVSLIAAVAGTIYIVY) is an intramembrane region. The Cytoplasmic segment spans residues 1502–2175 (RLFSGMQGPY…ALERKWYDSF (674 aa)). The residue at position 1511 (Y1511) is an O-(5'-phospho-RNA)-tyrosine. The 179-residue stretch at 1532–1710 (GPLFDFGVSL…FAASLLRRYF (179 aa)) folds into the Peptidase C3 domain. Active-site for protease 3C activity residues include H1571, E1602, and C1678. The 116-residue stretch at 1941–2056 (GELFGFDYTA…SYPYEIDASL (116 aa)) folds into the RdRp catalytic domain. Positions 1947 and 2042 each coordinate Mg(2+).

Belongs to the picornaviruses polyprotein family. As to quaternary structure, interacts with capsid protein VP1 and capsid protein VP3 to form heterotrimeric protomers. In terms of assembly, interacts with capsid protein VP0, and capsid protein VP3 to form heterotrimeric protomers. Five protomers subsequently associate to form pentamers which serve as building blocks for the capsid. Interacts with capsid protein VP2, capsid protein VP3 and capsid protein VP4 following cleavage of capsid protein VP0. Interacts with capsid protein VP1 and capsid protein VP3 in the mature capsid. As to quaternary structure, interacts with capsid protein VP0 and capsid protein VP1 to form heterotrimeric protomers. Five protomers subsequently associate to form pentamers which serve as building blocks for the capsid. Interacts with capsid protein VP4 in the mature capsid. Interacts with protein 2C; this interaction may be important for virion morphogenesis. In terms of assembly, interacts with capsid protein VP1 and capsid protein VP3. Homodimer. As to quaternary structure, homohexamer; forms a hexameric ring structure with 6-fold symmetry characteristic of AAA+ ATPases. Interacts (via N-terminus) with host RTN3 (via reticulon domain); this interaction is important for viral replication. Interacts with capsid protein VP3; this interaction may be important for virion morphogenesis. In terms of assembly, interacts with protein 3CD. Homodimer. Interacts with host GBF1. Interacts (via GOLD domain) with host ACBD3 (via GOLD domain); this interaction allows the formation of a viral protein 3A/ACBD3 heterotetramer with a 2:2 stoichiometry, which will stimulate the recruitment of host PI4KB in order to synthesize PI4P at the viral RNA replication sites. As to quaternary structure, interacts with RNA-directed RNA polymerase. In terms of assembly, interacts with protein 3AB and with RNA-directed RNA polymerase. Interacts with Viral protein genome-linked and with protein 3CD. Requires Mg(2+) as cofactor. Specific enzymatic cleavages in vivo by the viral proteases yield processing intermediates and the mature proteins. In terms of processing, myristoylation is required for the formation of pentamers during virus assembly. Further assembly of 12 pentamers and a molecule of genomic RNA generates the provirion. Post-translationally, during virion maturation, immature virions are rendered infectious following cleavage of VP0 into VP4 and VP2. This maturation seems to be an autocatalytic event triggered by the presence of RNA in the capsid and it is followed by a conformational change infectious virion. Myristoylation is required during RNA encapsidation and formation of the mature virus particle. In terms of processing, VPg is uridylylated by the polymerase into VPg-pUpU. This acts as a nucleotide-peptide primer for the genomic RNA replication.

The protein localises to the virion. Its subcellular location is the host cytoplasm. The protein resides in the host cytoplasmic vesicle membrane. It localises to the host nucleus. It catalyses the reaction a ribonucleoside 5'-triphosphate + H2O = a ribonucleoside 5'-diphosphate + phosphate + H(+). It carries out the reaction Selective cleavage of Tyr-|-Gly bond in the picornavirus polyprotein.. The catalysed reaction is RNA(n) + a ribonucleoside 5'-triphosphate = RNA(n+1) + diphosphate. The enzyme catalyses Selective cleavage of Gln-|-Gly bond in the poliovirus polyprotein. In other picornavirus reactions Glu may be substituted for Gln, and Ser or Thr for Gly.. With respect to regulation, replication or transcription is subject to high level of random mutations by the nucleotide analog ribavirin. Functionally, forms an icosahedral capsid of pseudo T=3 symmetry with capsid proteins VP2 and VP3. The capsid is 300 Angstroms in diameter, composed of 60 copies of each capsid protein and enclosing the viral positive strand RNA genome. Capsid protein VP1 mainly forms the vertices of the capsid. Capsid protein VP1 interacts with host cell receptor to provide virion attachment to target host cells. This attachment induces virion internalization. Tyrosine kinases are probably involved in the entry process. After binding to its receptor, the capsid undergoes conformational changes. Capsid protein VP1 N-terminus (that contains an amphipathic alpha-helix) and capsid protein VP4 are externalized. Together, they shape a pore in the host membrane through which viral genome is translocated to host cell cytoplasm. Its function is as follows. Forms an icosahedral capsid of pseudo T=3 symmetry with capsid proteins VP2 and VP3. The capsid is 300 Angstroms in diameter, composed of 60 copies of each capsid protein and enclosing the viral positive strand RNA genome. Lies on the inner surface of the capsid shell. After binding to the host receptor, the capsid undergoes conformational changes. Capsid protein VP4 is released, Capsid protein VP1 N-terminus is externalized, and together, they shape a pore in the host membrane through which the viral genome is translocated into the host cell cytoplasm. In terms of biological role, component of immature procapsids, which is cleaved into capsid proteins VP4 and VP2 after maturation. Allows the capsid to remain inactive before the maturation step. Functionally, cysteine protease that cleaves viral polyprotein and specific host proteins. It is responsible for the autocatalytic cleavage between the P1 and P2 regions, which is the first cleavage occurring in the polyprotein. Also cleaves the host translation initiation factor EIF4G1, in order to shut down the capped cellular mRNA translation. Inhibits the host nucleus-cytoplasm protein and RNA trafficking by cleaving host members of the nuclear pores. Counteracts stress granule formation probably by antagonizing its assembly or promoting its dissassembly. Its function is as follows. Plays an essential role in the virus replication cycle by acting as a viroporin. Creates a pore in the host endoplasmic reticulum and as a consequence releases Ca2+ in the cytoplasm of infected cell. In turn, high levels of cytoplasmic calcium may trigger membrane trafficking and transport of viral ER-associated proteins to viroplasms, sites of viral genome replication. Induces and associates with structural rearrangements of intracellular membranes. Displays RNA-binding, nucleotide binding and NTPase activities. May play a role in virion morphogenesis and viral RNA encapsidation by interacting with the capsid protein VP3. In terms of biological role, localizes the viral replication complex to the surface of membranous vesicles. Together with protein 3CD binds the Cis-Active RNA Element (CRE) which is involved in RNA synthesis initiation. Acts as a cofactor to stimulate the activity of 3D polymerase, maybe through a nucleid acid chaperone activity. Functionally, localizes the viral replication complex to the surface of membranous vesicles. It inhibits host cell endoplasmic reticulum-to-Golgi apparatus transport and causes the disassembly of the Golgi complex, possibly through GBF1 interaction. This would result in depletion of MHC, trail receptors and IFN receptors at the host cell surface. Plays an essential role in viral RNA replication by recruiting ACBD3 and PI4KB at the viral replication sites, thereby allowing the formation of the rearranged membranous structures where viral replication takes place. Its function is as follows. Acts as a primer for viral RNA replication and remains covalently bound to viral genomic RNA. VPg is uridylylated prior to priming replication into VPg-pUpU. The oriI viral genomic sequence may act as a template for this. The VPg-pUpU is then used as primer on the genomic RNA poly(A) by the RNA-dependent RNA polymerase to replicate the viral genome. During genome replication, the VPg-RNA linkage is removed by the host TDP2, thereby accelerating replication. During the late stage of the replication cycle, host TDP2 is excluded from sites of viral RNA synthesis and encapsidation, allowing for the generation of progeny virions. Involved in the viral replication complex and viral polypeptide maturation. It exhibits protease activity with a specificity and catalytic efficiency that is different from protease 3C. Protein 3CD lacks polymerase activity. Protein 3CD binds to the 5'UTR of the viral genome. In terms of biological role, replicates the viral genomic RNA on the surface of intracellular membranes. May form linear arrays of subunits that propagate along a strong head-to-tail interaction called interface-I. Covalently attaches UMP to a tyrosine of VPg, which is used to prime RNA synthesis. The positive stranded RNA genome is first replicated at virus induced membranous vesicles, creating a dsRNA genomic replication form. This dsRNA is then used as template to synthesize positive stranded RNA genomes. ss(+)RNA genomes are either translated, replicated or encapsidated. Functionally, major viral protease that mediates proteolytic processing of the polyprotein. Cleaves host EIF5B, contributing to host translation shutoff. Also cleaves host PABPC1, contributing to host translation shutoff. Cleaves host NLRP1, triggers host N-glycine-mediated degradation of the autoinhibitory NLRP1 N-terminal fragment. This chain is Genome polyprotein, found in Bos taurus (Bovine).